Here is a 434-residue protein sequence, read N- to C-terminus: ATP-dependent protease ATPase subunit HslU (434 aa).

ATP contacts are provided by residues valine 18, glycine 60 to glutamate 65, aspartate 247, glutamate 312, and arginine 384.

Belongs to the ClpX chaperone family. HslU subfamily. As to quaternary structure, a double ring-shaped homohexamer of HslV is capped on each side by a ring-shaped HslU homohexamer. The assembly of the HslU/HslV complex is dependent on binding of ATP.

The protein localises to the cytoplasm. Its function is as follows. ATPase subunit of a proteasome-like degradation complex; this subunit has chaperone activity. The binding of ATP and its subsequent hydrolysis by HslU are essential for unfolding of protein substrates subsequently hydrolyzed by HslV. HslU recognizes the N-terminal part of its protein substrates and unfolds these before they are guided to HslV for hydrolysis. This is ATP-dependent protease ATPase subunit HslU from Bradyrhizobium sp. (strain ORS 278).